The following is a 1051-amino-acid chain: Kinesin-like protein KIN-4B (1051 aa).

The disordered stretch occupies residues 1–21 (MESHSSLSSSSSSSPPSSLSS). The region spanning 25–380 (CVKVAVNVRP…LKYANRARNI (356 aa)) is the Kinesin motor domain. Position 104–111 (104–111 (GQTGSGKT)) interacts with ATP. Coiled-coil stretches lie at residues 414 to 448 (ATSS…RSKR) and 540 to 644 (RQHF…KMKQ). Residues 916 to 925 (SSSYSGSSRS) are compositionally biased toward low complexity. Disordered stretches follow at residues 916–946 (SSSY…SSTY) and 1029–1051 (MSKS…FQGA).

This sequence belongs to the TRAFAC class myosin-kinesin ATPase superfamily. Kinesin family. KIN-4 subfamily. In terms of assembly, homodimer.

In terms of biological role, kinesin-like motor protein involved in the control of the oriented deposition of cellulose microfibrils. The chain is Kinesin-like protein KIN-4B from Arabidopsis thaliana (Mouse-ear cress).